Reading from the N-terminus, the 321-residue chain is Glucokinase (321 aa).

ATP is bound at residue 8-13 (GDVGGT).

Belongs to the bacterial glucokinase family.

It localises to the cytoplasm. It carries out the reaction D-glucose + ATP = D-glucose 6-phosphate + ADP + H(+). In Shigella sonnei (strain Ss046), this protein is Glucokinase.